The chain runs to 557 residues: Potassium-transporting ATPase potassium-binding subunit (557 aa).

12 helical membrane-spanning segments follow: residues 5 to 25 (GFLLIATFLLVFMVLARPLGS), 63 to 83 (LSAILGLNILGLAVLFFMLLG), 132 to 152 (GLTVQNFLSAASGIAVIFALI), 170 to 190 (LLRITLWVLTPVALLIALFFI), 253 to 273 (FVQMLAIFLIPTALCFAFGEV), 283 to 303 (LLWAMSVIFVICVGVVMWAEV), 329 to 349 (VLVSSLFAVVTTAASCGAVIA), 356 to 376 (ALGGMVPMWLMQIGEVVFGGV), 379 to 399 (GLYGMMLFVLLAVFIAGLMIG), 416 to 436 (LTALAILVTPTLVLMGAALAM), 484 to 504 (LLALCMFVGRFGVIIPVMAIA), and 526 to 546 (LFVGLLIGTVLLVGALTFIPA).

The protein belongs to the KdpA family. In terms of assembly, the system is composed of three essential subunits: KdpA, KdpB and KdpC.

It is found in the cell inner membrane. In terms of biological role, part of the high-affinity ATP-driven potassium transport (or Kdp) system, which catalyzes the hydrolysis of ATP coupled with the electrogenic transport of potassium into the cytoplasm. This subunit binds the periplasmic potassium ions and delivers the ions to the membrane domain of KdpB through an intramembrane tunnel. The sequence is that of Potassium-transporting ATPase potassium-binding subunit from Escherichia coli (strain UTI89 / UPEC).